Consider the following 368-residue polypeptide: Hydrophobic dipeptide epimerase (368 aa).

Substrate-binding positions include Thr-143 and 168-170 (KIK). The Mg(2+) site is built by Asp-197, Glu-225, and Asp-253. Substrate contacts are provided by residues Lys-277 and 329–331 (DMD).

The protein belongs to the mandelate racemase/muconate lactonizing enzyme family. The cofactor is Mg(2+).

Functionally, catalyzes the epimerization of various hydrophobic dipeptides, such as L-Ala-L-Phe. Has epimerase activity with L-Ala-L-Thr, L-Ala-L-Met, L-Ala-L-Tyr, as well as L-Phe-L-Met, L-Phe-L-Ser and L-Phe-L-Thr (in vitro). This Citrifermentans bemidjiense (strain ATCC BAA-1014 / DSM 16622 / JCM 12645 / Bem) (Geobacter bemidjiensis) protein is Hydrophobic dipeptide epimerase.